A 331-amino-acid chain; its full sequence is Tetraspanin-10 (331 aa).

Positions 1–34 are disordered; that stretch reads MKEEECSPLLSQDTAGREHPLTRNSPPTANIPCP. The Cytoplasmic segment spans residues 1 to 76; it reads MKEEECSPLL…LSTGSNCVKY (76 aa). A helical membrane pass occupies residues 77–97; the sequence is LIFLSNFLFSLPSLLALAAGL. Over 98-120 the chain is Extracellular; sequence WGLTVKRSQGIGWGGPVPTDPML. A helical transmembrane segment spans residues 121–141; the sequence is MLVLGGLVVSVVSLSGCLGAF. At 142-152 the chain is on the cytoplasmic side; that stretch reads CENSCLLHWYC. A helical transmembrane segment spans residues 153–173; sequence GAVLFCLALEALAGVLMVTLW. The Extracellular segment spans residues 174–331; it reads KPLQDSLKYT…AAEDIEAGPL (158 aa). Cystine bridges form between cysteine 210-cysteine 277, cysteine 211-cysteine 241, cysteine 227-cysteine 235, and cysteine 242-cysteine 256. Asparagine 226 carries an N-linked (GlcNAc...) asparagine glycan.

The protein belongs to the tetraspanin (TM4SF) family. As to quaternary structure, interacts with ADAM10.

The protein localises to the cell membrane. Part of TspanC8 subgroup, composed of 6 members that interact with the transmembrane metalloprotease ADAM10. This interaction is required for ADAM10 exit from the endoplasmic reticulum and for enzymatic maturation and trafficking to the cell surface as well as substrate specificity. Different TspanC8/ADAM10 complexes have distinct substrates. The sequence is that of Tetraspanin-10 (Tspan10) from Mus musculus (Mouse).